The primary structure comprises 66 residues: Brevinin-1DYb (66 aa).

A signal peptide spans 1–22; that stretch reads MFTLKKSLLLLFFLGTISLSLC. A propeptide spanning residues 23 to 44 is cleaved from the precursor; it reads EEERNAEEERRDYPEERDVEVE. A disulfide bridge connects residues cysteine 60 and cysteine 66.

In terms of tissue distribution, expressed by the skin glands.

Its subcellular location is the secreted. Its function is as follows. Antimicrobial peptide. Has low activity against the Gram-positive bacterium S.aureus and the Gram-negative bacterium E.coli (MIC&lt;15 uM). Has a strong hemolytic activity. In Rana dybowskii (Dybovsky's frog), this protein is Brevinin-1DYb.